The chain runs to 136 residues: Large ribosomal subunit protein eL27 (136 aa).

Belongs to the eukaryotic ribosomal protein eL27 family.

The polypeptide is Large ribosomal subunit protein eL27 (RPL27) (Candida albicans (Yeast)).